A 1460-amino-acid chain; its full sequence is Venom prothrombin activator omicarin-C non-catalytic subunit (1460 aa).

Positions 1 to 30 (MGRYSVSPVPKCLLLMFLGWSGLKYYQVNA) are cleaved as a signal peptide. Plastocyanin-like domains lie at 32–196 (QLRE…LLIC), 206–330 (AQKF…LNIK), 351–529 (MNWE…LLVC), and 539–685 (VQNK…FLDA). 2 consecutive F5/8 type A domains span residues 32–330 (QLRE…LNIK) and 350–685 (IMNW…FLDA). Lysine 124, glutamate 139, aspartate 142, and aspartate 143 together coordinate Ca(2+). Asparagine 156 carries an N-linked (GlcNAc...) asparagine glycan. Cysteines 170 and 196 form a disulfide. Asparagine 242, asparagine 300, asparagine 385, asparagine 406, and asparagine 471 each carry an N-linked (GlcNAc...) asparagine glycan. Cysteine 251 and cysteine 332 form a disulfide bridge. Cysteine 503 and cysteine 529 are disulfide-bonded. Residue asparagine 557 is glycosylated (N-linked (GlcNAc...) asparagine). Intrachain disulfides connect cysteine 672/cysteine 1031, cysteine 965/cysteine 991, cysteine 1147/cysteine 1298, and cysteine 1303/cysteine 1457. A b region spans residues 693–817 (GNEEEEEDDG…SDDIAGRYLR (125 aa)). The tract at residues 740–760 (LLDDEDNPEQSRSEQTEDDEE) is disordered. The propeptide at 772-817 (SFKGSVAEEELKHTALALEEDAHASDPRIDSNSARNSDDIAGRYLR) is activation peptide (connecting region). Plastocyanin-like domains follow at residues 823-991 (NKRR…ILIC) and 1000-1143 (NRTI…FTVI). Residues 823 to 1143 (NKRRYYIAAE…RGMQALFTVI (321 aa)) enclose the F5/8 type A 3 domain. Lysine 919, phenylalanine 934, aspartate 937, and aspartate 938 together coordinate Ca(2+). The N-linked (GlcNAc...) asparagine glycan is linked to asparagine 943. Asparagine 1000, asparagine 1180, and asparagine 1397 each carry an N-linked (GlcNAc...) asparagine glycan. F5/8 type C domains lie at 1147 to 1298 (CKLP…LLGC) and 1303 to 1457 (CSVP…LFGC).

The protein belongs to the multicopper oxidase family. In terms of assembly, heterodimer of a light and a heavy chains; non-disulfide-linked. The interaction between the two chains is calcium-dependent. Found in its active form associated with omicarin-C catalytic subunit (AC Q58L95). In terms of processing, in physiological conditions, blood coagulation factor V and factor Va are inactivated by activated protein C (APC) through proteolytic degradation of the heavy chain. However, omicarin-C non-catalytic subunit (factor V-like protein) retains its full activity even at high concentration of APC. This has two explanations: this protein has only one of the three cleavage sites present in factor V that are targeted by the APC for inactivation, and the binding with the catalytic subunit protect the cleavage site from inactivation. Expressed by the venom gland.

Its subcellular location is the secreted. Snake prothrombin activator that attacks the hemostatic system of prey. This non-catalytic subunit is functionally similar to blood coagulation factor V. It serves as a critical cofactor for the prothrombinase activity of the catalytic subunit, which is similar to the blood coagulation factor X. The complex converts prothrombin to thrombin by sequential cleavage at two positions, Arg-320 followed by Arg-271. Cleavage at Arg-320 produces an active intermediate known as meizothrombin. Meizothrombin is the 'second' substrate for prothrombinase, and it docks in an altered manner to present the second cleavage site (271). Cleavage at Arg-271 releases active thrombin from its pro-fragment. This order of events is reversed if the protease component of prothrombinase is used on its own, suggesting that the 271 site is inherently more accessible to proteolysis. In Oxyuranus microlepidotus (Inland taipan), this protein is Venom prothrombin activator omicarin-C non-catalytic subunit.